The primary structure comprises 214 residues: Glycine-rich protein 2 (214 aa).

In terms of domain architecture, CSD spans 8–75; that stretch reads RAKGTVKWFS…RTKAVDVTGP (68 aa). The disordered stretch occupies residues 54–91; it reads TVEFEVESGGDGRTKAVDVTGPDGAAVQGGRGGGGGGG. The segment covering 80-91 has biased composition (gly residues); it reads VQGGRGGGGGGG. 2 CCHC-type zinc fingers span residues 157–174 and 194–211; these read SGCF…DCSQ and GGCY…ECTS.

The sequence is that of Glycine-rich protein 2 (GRP-2) from Nicotiana sylvestris (Wood tobacco).